The primary structure comprises 208 residues: Exosome complex component CSL4 homolog (208 aa).

As to quaternary structure, component of the RNA exosome complex. In terms of tissue distribution, ubiquitously expressed.

It is found in the nucleus. The protein resides in the nucleolus. Its subcellular location is the nucleoplasm. In terms of biological role, non-catalytic component of the RNA exosome complex which has 3'-&gt;5' exoribonuclease activity and participates in a multitude of cellular RNA processing and degradation events. Involved in regulation of antisense ribosomal siRNA production. Involved in response to cold-warm shock. The chain is Exosome complex component CSL4 homolog from Caenorhabditis elegans.